We begin with the raw amino-acid sequence, 319 residues long: Plasmodesmata-located protein 4 (319 aa).

Residues 1–26 form the signal peptide; that stretch reads MVVHLISLLTQTLALIILSLPSIINT. The Extracellular segment spans residues 27–288; the sequence is SQLDYDTLVF…EGSKVNTGKS (262 aa). 6 disulfide bridges follow: C39-C127, C103-C112, C115-C140, C177-C247, C223-C232, and C235-C260. Gnk2-homologous domains follow at residues 45–149 and 170–269; these read NILQ…FERI and HGLI…YHPH. The helical transmembrane segment at 289 to 309 threads the bilayer; the sequence is LAIVVGGVAALVFVAIFFMFL. Residues 289 to 309 form a necessary and sufficient for plasmodesmal targeting region; it reads LAIVVGGVAALVFVAIFFMFL. The Cytoplasmic portion of the chain corresponds to 310–319; the sequence is KSLRKKGDDC.

Belongs to the cysteine-rich repeat secretory protein family. Plasmodesmata-located proteins (PDLD) subfamily. (Microbial infection) Interacts with Grapevine fanleaf virus (GFLV) 2B-MP. Highly expressed in seeds and roots.

It is found in the cell membrane. The protein localises to the cell junction. It localises to the plasmodesma. Modulates cell-to-cell trafficking. This chain is Plasmodesmata-located protein 4, found in Arabidopsis thaliana (Mouse-ear cress).